Here is a 61-residue protein sequence, read N- to C-terminus: MPEFQERVRNFFKESKRVFLVTKKPGWEEYKKAAKITGLGILVIGLVGMLIRIIGILMLGG.

Residues 39 to 59 (LGILVIGLVGMLIRIIGILML) form a helical membrane-spanning segment.

The protein belongs to the SecE/SEC61-gamma family. In terms of assembly, component of the Sec protein translocase complex. Heterotrimer consisting of SecY (alpha), SecG (beta) and SecE (gamma) subunits. The heterotrimers can form oligomers, although 1 heterotrimer is thought to be able to translocate proteins. Interacts with the ribosome. May interact with SecDF, and other proteins may be involved.

It is found in the cell membrane. Its function is as follows. Essential subunit of the Sec protein translocation channel SecYEG. Clamps together the 2 halves of SecY. May contact the channel plug during translocation. The chain is Protein translocase subunit SecE from Pyrococcus horikoshii (strain ATCC 700860 / DSM 12428 / JCM 9974 / NBRC 100139 / OT-3).